The chain runs to 298 residues: Inosose dehydratase (298 aa).

It belongs to the IolE/MocC family. Glutathione serves as cofactor. It depends on Co(2+) as a cofactor. Mn(2+) is required as a cofactor.

It carries out the reaction scyllo-inosose = 3D-3,5/4-trihydroxycyclohexane-1,2-dione + H2O. The protein operates within polyol metabolism; myo-inositol degradation into acetyl-CoA; acetyl-CoA from myo-inositol: step 2/7. Functionally, catalyzes the dehydration of inosose (2-keto-myo-inositol, 2KMI or 2,4,6/3,5-pentahydroxycyclohexanone) to 3D-(3,5/4)-trihydroxycyclohexane-1,2-dione (D-2,3-diketo-4-deoxy-epi-inositol). The chain is Inosose dehydratase from Clostridium botulinum (strain Alaska E43 / Type E3).